The following is a 216-amino-acid chain: Large ribosomal subunit protein uL1 (216 aa).

This sequence belongs to the universal ribosomal protein uL1 family. In terms of assembly, component of the large ribosomal subunit.

Its subcellular location is the cytoplasm. Its function is as follows. Component of the large ribosomal subunit. The ribosome is a large ribonucleoprotein complex responsible for the synthesis of proteins in the cell. In Ictalurus punctatus (Channel catfish), this protein is Large ribosomal subunit protein uL1 (rpl10a).